We begin with the raw amino-acid sequence, 498 residues long: ATP synthase subunit beta, chloroplastic (498 aa).

172–179 (GGAGVGKT) contacts ATP.

Belongs to the ATPase alpha/beta chains family. F-type ATPases have 2 components, CF(1) - the catalytic core - and CF(0) - the membrane proton channel. CF(1) has five subunits: alpha(3), beta(3), gamma(1), delta(1), epsilon(1). CF(0) has four main subunits: a(1), b(1), b'(1) and c(9-12).

The protein resides in the plastid. Its subcellular location is the chloroplast thylakoid membrane. It carries out the reaction ATP + H2O + 4 H(+)(in) = ADP + phosphate + 5 H(+)(out). Functionally, produces ATP from ADP in the presence of a proton gradient across the membrane. The catalytic sites are hosted primarily by the beta subunits. The chain is ATP synthase subunit beta, chloroplastic from Saccharum hybrid (Sugarcane).